Reading from the N-terminus, the 23-residue chain is Maculatin-1.2 (23 aa).

Alanine amide is present on alanine 23.

Expressed by the skin dorsal glands.

It is found in the secreted. Its function is as follows. Shows antibacterial activity against S.aureus and S.uberis. This Ranoidea genimaculata (Brown-spotted tree frog) protein is Maculatin-1.2.